The sequence spans 250 residues: uncharacterized protein (250 aa).

Residues Glu-97, Glu-99, and Asp-128 each coordinate a divalent metal cation.

This sequence belongs to the FAH family.

This is an uncharacterized protein from Archaeoglobus fulgidus (strain ATCC 49558 / DSM 4304 / JCM 9628 / NBRC 100126 / VC-16).